We begin with the raw amino-acid sequence, 345 residues long: uncharacterized protein (345 aa).

This sequence belongs to the transketolase family. Thiamine diphosphate serves as cofactor.

This is an uncharacterized protein from Sinorhizobium fredii (strain NBRC 101917 / NGR234).